Reading from the N-terminus, the 499-residue chain is Aspartyl/glutamyl-tRNA(Asn/Gln) amidotransferase subunit B (499 aa).

It belongs to the GatB/GatE family. GatB subfamily. As to quaternary structure, heterotrimer of A, B and C subunits.

It carries out the reaction L-glutamyl-tRNA(Gln) + L-glutamine + ATP + H2O = L-glutaminyl-tRNA(Gln) + L-glutamate + ADP + phosphate + H(+). The enzyme catalyses L-aspartyl-tRNA(Asn) + L-glutamine + ATP + H2O = L-asparaginyl-tRNA(Asn) + L-glutamate + ADP + phosphate + 2 H(+). Functionally, allows the formation of correctly charged Asn-tRNA(Asn) or Gln-tRNA(Gln) through the transamidation of misacylated Asp-tRNA(Asn) or Glu-tRNA(Gln) in organisms which lack either or both of asparaginyl-tRNA or glutaminyl-tRNA synthetases. The reaction takes place in the presence of glutamine and ATP through an activated phospho-Asp-tRNA(Asn) or phospho-Glu-tRNA(Gln). This chain is Aspartyl/glutamyl-tRNA(Asn/Gln) amidotransferase subunit B, found in Salinispora tropica (strain ATCC BAA-916 / DSM 44818 / JCM 13857 / NBRC 105044 / CNB-440).